The sequence spans 201 residues: ADP-ribosylation factor-related protein 1 (201 aa).

Methionine 1 carries the N-acetylmethionine modification. GTP contacts are provided by residues glycine 24–threonine 31, aspartate 75–glutamine 79, and asparagine 134–aspartate 137.

Belongs to the small GTPase superfamily. Arf family. Interacts with SYS1.

It is found in the golgi apparatus. Its subcellular location is the trans-Golgi network. Its function is as follows. Trans-Golgi-associated GTPase that regulates protein sorting. Controls the targeting of ARL1 and its effector to the trans-Golgi. Required for the lipidation of chylomicrons in the intestine and required for VLDL lipidation in the liver. This Mus musculus (Mouse) protein is ADP-ribosylation factor-related protein 1 (Arfrp1).